We begin with the raw amino-acid sequence, 194 residues long: FK506-binding protein 3 (194 aa).

A signal peptide spans 1–19; the sequence is MNKFLIALLVLATLAVSFS. The region spanning 44–133 is the PPIase FKBP-type domain; sequence GDYISLKYVG…YFDLEVVSIE (90 aa). A helical membrane pass occupies residues 148–168; that stretch reads VGTIIAFSMLAGFIVLVKFII. The tract at residues 173 to 194 is disordered; that stretch reads DESNSKKPAPGKPKKTKAAKQN. The segment covering 184 to 194 has biased composition (basic residues); it reads KPKKTKAAKQN.

This sequence belongs to the FKBP-type PPIase family.

Its subcellular location is the membrane. It catalyses the reaction [protein]-peptidylproline (omega=180) = [protein]-peptidylproline (omega=0). With respect to regulation, inhibited by both FK506 and rapamycin. In terms of biological role, PPIases accelerate the folding of proteins by catalyzing the cis-trans isomerization of proline imidic peptide bonds in oligopeptides. This chain is FK506-binding protein 3 (fkbp3), found in Dictyostelium discoideum (Social amoeba).